A 378-amino-acid chain; its full sequence is Beta sliding clamp (378 aa).

Belongs to the beta sliding clamp family. Forms a ring-shaped head-to-tail homodimer around DNA which binds and tethers DNA polymerases and other proteins to the DNA. The DNA replisome complex has a single clamp-loading complex (3 tau and 1 each of delta, delta', psi and chi subunits) which binds 3 Pol III cores (1 core on the leading strand and 2 on the lagging strand) each with a beta sliding clamp dimer. Additional proteins in the replisome are other copies of gamma, psi and chi, Ssb, DNA helicase and RNA primase.

It localises to the cytoplasm. Confers DNA tethering and processivity to DNA polymerases and other proteins. Acts as a clamp, forming a ring around DNA (a reaction catalyzed by the clamp-loading complex) which diffuses in an ATP-independent manner freely and bidirectionally along dsDNA. Initially characterized for its ability to contact the catalytic subunit of DNA polymerase III (Pol III), a complex, multichain enzyme responsible for most of the replicative synthesis in bacteria; Pol III exhibits 3'-5' exonuclease proofreading activity. The beta chain is required for initiation of replication as well as for processivity of DNA replication. This Streptococcus pneumoniae (strain ATCC BAA-255 / R6) protein is Beta sliding clamp (dnaN).